The primary structure comprises 72 residues: Translation initiation factor IF-1 (72 aa).

In terms of domain architecture, S1-like spans 1–72 (MAKEDMIEVE…TRGRITYRFK (72 aa)).

It belongs to the IF-1 family. Component of the 30S ribosomal translation pre-initiation complex which assembles on the 30S ribosome in the order IF-2 and IF-3, IF-1 and N-formylmethionyl-tRNA(fMet); mRNA recruitment can occur at any time during PIC assembly.

It localises to the cytoplasm. Functionally, one of the essential components for the initiation of protein synthesis. Stabilizes the binding of IF-2 and IF-3 on the 30S subunit to which N-formylmethionyl-tRNA(fMet) subsequently binds. Helps modulate mRNA selection, yielding the 30S pre-initiation complex (PIC). Upon addition of the 50S ribosomal subunit IF-1, IF-2 and IF-3 are released leaving the mature 70S translation initiation complex. This chain is Translation initiation factor IF-1, found in Enterococcus faecalis (strain ATCC 700802 / V583).